We begin with the raw amino-acid sequence, 689 residues long: MSEKTFLVEIGTEELPPKALRSLAESFAANFTVELDNAGLAHGTVQWFAAPRRLTLKVANLAEAQPDREIEKRGPAIAQAFDAEGKPSKAAEGWARGCGITVDQAERLTTDKGEWLLYRAHVKGESTEALLPNMVATSLAKLPIPKLMRWGASDVHFVRPVHTVTLLLGDKVIPATILGIQSDRVIRGHRFMGEPEFTIDNADQYPEILRERGKVIADYEERKAKIKADAEEAARKIGGNADLSESLLEEVASLVEWPVVLTAKFEEKFLAVPAEALVYTMKGDQKYFPVYANDGKLLPNFIFVANIESKDPQQIISGNEKVVRPRLADAEFFFNTDRKKRLEDNLPRLQTVLFQQQLGTLRDKTDRIQALAGWIAEQIGADVNHATRAGLLSKCDLMTNMVFEFTDTQGVMGMHYARHDGEAEDVAVALNEQYQPRFAGDDLPSNPVACALAIADKMDTLAGIFGIGQHPKGDKDPFALRRAALGVLRIIVEKNLNLDLQTLTEEAVRLYGDKLTNANVVDDVIDFMLGRFRAWYQDEGYTVDTIQAVLARRPTRPADFDARMKAVSHFRTLDAAAALAAANKRVSNILAKSDEVLSDRVNASTLKEPEEIKLAMQVVVLRDKLEPYFAEGRYQDALVELAELREPVDAFFDKVMVMVDDKELRLNRLTMLEKLRELFLRVADISLLQ.

This sequence belongs to the class-II aminoacyl-tRNA synthetase family. Tetramer of two alpha and two beta subunits.

Its subcellular location is the cytoplasm. It carries out the reaction tRNA(Gly) + glycine + ATP = glycyl-tRNA(Gly) + AMP + diphosphate. This chain is Glycine--tRNA ligase beta subunit, found in Shigella boydii serotype 18 (strain CDC 3083-94 / BS512).